Consider the following 150-residue polypeptide: Endoribonuclease YbeY (150 aa).

Residues His112, His116, and Asp122 each contribute to the Zn(2+) site.

It belongs to the endoribonuclease YbeY family. Zn(2+) is required as a cofactor.

It localises to the cytoplasm. In terms of biological role, single strand-specific metallo-endoribonuclease involved in late-stage 70S ribosome quality control and in maturation of the 3' terminus of the 16S rRNA. This chain is Endoribonuclease YbeY, found in Protochlamydia amoebophila (strain UWE25).